The sequence spans 305 residues: uncharacterized protein (305 aa).

Belongs to the ADP-ribosylglycohydrolase family.

This is an uncharacterized protein from Archaeoglobus fulgidus (strain ATCC 49558 / DSM 4304 / JCM 9628 / NBRC 100126 / VC-16).